A 1009-amino-acid chain; its full sequence is MEALTLWLLPWICQCVSVRADSIIHIGAIFEENAAKDDRVFQLAVSDLSLNDDILQSEKITYSIKVIEANNPFQAVQEACDLMTQGILALVTSTGCASANALQSLTDAMHIPHLFVQRNPGGSPRTACHLNPSPDGEAYTLASRPPVRLNDVMLRLVTELRWQKFVMFYDSEYDIRGLQSFLDQASRLGLDVSLQKVDKNISHVFTSLFTTMKTEELNRYRDTLRRAILLLSPQGAHSFINEAVETNLASKDSHWVFVNEEISDPEILDLVHSALGRMTVVRQIFPSAKDNQKCTRNNHRISSLLCDPQEGYLQMLQISNLYLYDSVLMLANAFHRKLEDRKWHSMASLNCIRKSTKPWNGGRSMLDTIKKGHITGLTGVMEFREDSSNPYVQFEILGTTYSETFGKDMRKLATWDSEKGLNGSLQERPMGSRLQGLTLKVVTVLEEPFVMVAENILGQPKRYKGFSIDVLDALAKALGFKYEIYQAPDGRYGHQLHNTSWNGMIGELISKRADLAISAITITPERESVVDFSKRYMDYSVGILIKKPEEKISIFSLFAPFDFAVWACIAAAIPVVGVLIFVLNRIQAVRAQSAAQPRPSASATLHSAIWIVYGAFVQQGGESSVNSMAMRIVMGSWWLFTLIVCSSYTANLAAFLTVSRMDNPIRTFQDLSKQVEMSYGTVRDSAVYEYFRAKGTNPLEQDSTFAELWRTISKNGGADNCVSSPSEGIRKAKKGNYAFLWDVAVVEYAALTDDDCSVTVIGNSISSKGYGIALQHGSPYRDLFSQRILELQDTGDLDVLKQKWWPHMGRCDLTSHASAQADGKSLKLHSFAGVFCILAIGLLLACLVAALELWWNSNRCHQETPKEDKEVNLEQVHRRMNSLMDEDIAHKQISPASIELSALEMGGLAPTQTLEPTREYQNTQLSVSTFLPEQSSHGTSRTLSSGPSSNLPLPLSSSATMPSMQCKHRSPNGGLFRQSPVKTPIPMSFQPVPGGVLPEALDTSHGTSI.

Positions 1–20 (MEALTLWLLPWICQCVSVRA) are cleaved as a signal peptide. The interaction with CBLN1 stretch occupies residues 21 to 436 (DSIIHIGAIF…ERPMGSRLQG (416 aa)). Topologically, residues 21 to 562 (DSIIHIGAIF…SIFSLFAPFD (542 aa)) are extracellular. Cystine bridges form between cysteine 80-cysteine 351, cysteine 96-cysteine 128, and cysteine 294-cysteine 306. Asparagine 131 and asparagine 200 each carry an N-linked (GlcNAc...) asparagine glycan. Residues asparagine 422 and asparagine 498 are each glycosylated (N-linked (GlcNAc...) asparagine). The Ca(2+) site is built by glutamate 527, valine 530, and aspartate 531. A helical transmembrane segment spans residues 563-583 (FAVWACIAAAIPVVGVLIFVL). Topologically, residues 584-637 (NRIQAVRAQSAAQPRPSASATLHSAIWIVYGAFVQQGGESSVNSMAMRIVMGSW) are cytoplasmic. A helical transmembrane segment spans residues 638 to 658 (WLFTLIVCSSYTANLAAFLTV). The Extracellular segment spans residues 659-830 (SRMDNPIRTF…ADGKSLKLHS (172 aa)). Residues aspartate 753, aspartate 755, and serine 757 each contribute to the Ca(2+) site. The helical transmembrane segment at 831-851 (FAGVFCILAIGLLLACLVAAL) threads the bilayer. Residues 852-1009 (ELWWNSNRCH…ALDTSHGTSI (158 aa)) are Cytoplasmic-facing. Polar residues predominate over residues 930–942 (FLPEQSSHGTSRT). The tract at residues 930 to 954 (FLPEQSSHGTSRTLSSGPSSNLPLP) is disordered. Residues 943-954 (LSSGPSSNLPLP) show a composition bias toward low complexity.

It belongs to the glutamate-gated ion channel (TC 1.A.10.1) family. GRID1 subfamily. As to quaternary structure, homodimer. Interacts (via extracellular N-terminal domain) with CBLN1 (via C1q domain), and more weakly with CBLN2; the interactions mediate the trans-synaptic adhesion complexes also with neurexins and are required for ligand-gated cation channel activity.

The protein localises to the postsynaptic cell membrane. It carries out the reaction Ca(2+)(in) = Ca(2+)(out). It catalyses the reaction Na(+)(in) = Na(+)(out). Member of the ionotropic glutamate receptor family, which plays a crucial role in synaptic organization and signal transduction in the central nervous system. Although it shares structural features with ionotropic glutamate receptors, does not bind glutamate as a primary ligand. Instead, forms trans-synaptic adhesion complexes with presynaptic neurexins and cerebellins, regulating NMDA and AMPA receptor activity and influencing synaptic plasticity through signal transduction. In the presence of neurexins and cerebellins, forms cation-selective channels that are proposed to be gated by glycine and D-serine. However, recent research disputes this ligand-gated cation channel activity. Cation-selective ion channel can be triggered by GRM1 in dopaminergic neurons. Also acts as a receptor for GABA, modulating inhibitory synaptic plasticity through non-ionotropic mechanisms. This chain is Glutamate receptor ionotropic, delta-1, found in Homo sapiens (Human).